A 329-amino-acid polypeptide reads, in one-letter code: Flotillin-like protein FloA (329 aa).

Helical transmembrane passes span 4–24 and 26–46; these read IAFILIVGAILVFISLFFAIV and VGLWISAFAANVRVSIFTLIG.

This sequence belongs to the flotillin-like FloA family. Homooligomerizes.

Its subcellular location is the cell membrane. The protein localises to the membrane raft. In terms of biological role, found in functional membrane microdomains (FMM) that may be equivalent to eukaryotic membrane rafts. FMMs are highly dynamic and increase in number as cells age. Flotillins are thought to be important factors in membrane fluidity. The polypeptide is Flotillin-like protein FloA (Acetivibrio thermocellus (strain ATCC 27405 / DSM 1237 / JCM 9322 / NBRC 103400 / NCIMB 10682 / NRRL B-4536 / VPI 7372) (Clostridium thermocellum)).